A 143-amino-acid chain; its full sequence is Sirohydrochlorin cobaltochelatase (143 aa).

The active-site Proton acceptor is histidine 9. A Co(2+)-binding site is contributed by histidine 9. Histidine 9 lines the Ni(2+) pocket. Substrate-binding positions include glutamate 45 and 70 to 75 (LAHGVH). Position 75 (histidine 75) interacts with Co(2+). Ni(2+) is bound at residue histidine 75.

This sequence belongs to the CbiX family. CbiXS subfamily. As to quaternary structure, homotetramer; dimer of dimers.

The enzyme catalyses Co-sirohydrochlorin + 2 H(+) = sirohydrochlorin + Co(2+). It catalyses the reaction Ni-sirohydrochlorin + 2 H(+) = sirohydrochlorin + Ni(2+). The protein operates within cofactor biosynthesis; adenosylcobalamin biosynthesis; cob(II)yrinate a,c-diamide from sirohydrochlorin (anaerobic route): step 1/10. Its function is as follows. Catalyzes the insertion of Co(2+) into sirohydrochlorin as part of the anaerobic pathway to cobalamin biosynthesis. Involved in the biosynthesis of the unique nickel-containing tetrapyrrole coenzyme F430, the prosthetic group of methyl-coenzyme M reductase (MCR), which plays a key role in methanogenesis and anaerobic methane oxidation. Catalyzes the insertion of Ni(2+) into sirohydrochlorin to yield Ni-sirohydrochlorin. This is Sirohydrochlorin cobaltochelatase from Methanopyrus kandleri (strain AV19 / DSM 6324 / JCM 9639 / NBRC 100938).